A 145-amino-acid chain; its full sequence is Secreted RxLR effector protein 43 (145 aa).

Positions 1–20 are cleaved as a signal peptide; sequence MKVTMALAALCVALQAPCIG. The RxLR motif lies at 31–34; that stretch reads RHLR.

It belongs to the RxLR effector family.

It localises to the secreted. Its subcellular location is the host nucleus. The protein localises to the host cytoplasm. In terms of biological role, secreted effector that completely suppresses the host cell death induced by cell death-inducing proteins. The polypeptide is Secreted RxLR effector protein 43 (Plasmopara viticola (Downy mildew of grapevine)).